Reading from the N-terminus, the 282-residue chain is Nucleotide-binding protein in ptsN-ptsO intergenic region (282 aa).

8-15 lines the ATP pocket; the sequence is GRSGSGKS. Position 56–59 (56–59) interacts with GTP; sequence DVRN.

Belongs to the RapZ-like family.

Displays ATPase and GTPase activities. This is Nucleotide-binding protein in ptsN-ptsO intergenic region from Shewanella violacea.